Reading from the N-terminus, the 265-residue chain is Short chain dehydrogenase mdpC (265 aa).

NADP(+)-binding residues include Ile-25, Asn-98, and Arg-131. Residues Ser-147 and Ser-148 each act as proton donor in the active site. NADP(+) contacts are provided by Tyr-162, Lys-166, and Thr-197. Tyr-162 serves as the catalytic Proton acceptor. Lys-166 acts as the Lowers pKa of active site Tyr in catalysis.

The protein belongs to the short-chain dehydrogenases/reductases (SDR) family.

The enzyme catalyses 3,8,9,10-tetrahydroxy-6-methyl-1,4-dihydroanthracen-1-one + NADPH + H(+) = (3R)-3,8,9,10-tetrahydroxy-6-methyl-1,2,3,4-tetrahydroanthracen-1-one + NADP(+). It participates in secondary metabolite biosynthesis. Its function is as follows. Short chain dehydrogenase; part of the gene cluster that mediates the biosynthesis of monodictyphenone, a prenyl xanthone derivative. The pathway begins with the synthesis of atrochrysone thioester by the polyketide synthase (PKS) mdpG. The atrochrysone carboxyl ACP thioesterase mdpF then breaks the thioester bond and releases the atrochrysone carboxylic acid from mdpG. The atrochrysone carboxylic acid is then converted to atrochrysone which is further transformed into emodin anthrone. The next step is performed by the anthrone oxygenase mdpH that catalyzes the oxidation of emodinanthrone to emodin. Emodin is further modified to yield monodictyphenone via several steps involving mdpB, mdpC mdpJ, mdpK and mdpL. The short chain dehydrogenase mdpC converts the tautomers of emodin hydroquinone into the 3-hydroxy-3,4-dihydroan-thracen-1(2H)-one derivative. These enzymes with xptA, xptB and xptC are also proposed to be involved in the synthesis of shamixanthone from emodin. Especially, direct reduction of emodin by the short chain dehydrogenase mdpC followed by dehydration catalyzed by the scytalone dehydratase-like protein mdpB gives loss of oxygen and formation of chrysophanol intermediate in two simple steps. This is Short chain dehydrogenase mdpC from Emericella nidulans (strain FGSC A4 / ATCC 38163 / CBS 112.46 / NRRL 194 / M139) (Aspergillus nidulans).